The chain runs to 994 residues: Chloride channel protein E (994 aa).

The disordered stretch occupies residues 1 to 33 (MTRKENEESESLSSSSSPIDNSNNNNNNNNHSI). The Cytoplasmic portion of the chain corresponds to 1-163 (MTRKENEESE…HWLGKERIST (163 aa)). Positions 11–32 (SLSSSSSPIDNSNNNNNNNNHS) are enriched in low complexity. A run of 11 helical transmembrane segments spans residues 164–184 (LLFI…CDFL), 227–247 (IVFV…ISFI), 271–291 (VLGF…SAAG), 300–320 (FMHA…FGAI), 334–354 (ALTS…LFAI), 362–382 (VMGN…IFFL), 410–430 (LITF…FVFI), 449–469 (IILV…AGPL), 505–525 (LLVF…LPIP), 527–547 (GAIT…GEIL), and 554–574 (QAIE…SGTI). The 62-residue stretch at 644–705 (MKKNINYLSM…LDIHIENIEQ (62 aa)) folds into the CBS 1 domain. 3 disordered regions span residues 715-767 (FVNN…NSEN), 802-822 (IKPN…SDFE), and 846-872 (DENS…GDGI). Composition is skewed to low complexity over residues 717–764 (NNNN…NSNN) and 809–822 (SSSN…SDFE). Residues 859-870 (HDDEDDDEEEGD) are compositionally biased toward acidic residues. A CBS 2 domain is found at 944–994 (MDLAPSQVPDLTPLNKVFHLFTMLGLGFTYVTSLGKLVGVITKNSLMEQDL).

It belongs to the chloride channel (TC 2.A.49) family.

Its subcellular location is the membrane. Voltage-gated chloride channel. Chloride channels may have several functions including the regulation of cell volume, membrane potential stabilization and signal transduction. The polypeptide is Chloride channel protein E (clcE) (Dictyostelium discoideum (Social amoeba)).